Here is a 130-residue protein sequence, read N- to C-terminus: MSGRGKQGGKARAKAKSRSSRAGLQFPVGRVHRLLRKGNYSERVGAGAPVYLAAVLEYLTAEILELAGNAARDNKKTRIIPRHLQLAIRNDEELNKLLGRVTIAQGGVLPNIQAVLLPKKTESHHKAKGK.

A disordered region spans residues 1–22 (MSGRGKQGGKARAKAKSRSSRA). Ser2 is modified (N-acetylserine). Ser2 bears the Phosphoserine; by RPS6KA5 mark. Arg4 bears the Citrulline; alternate mark. The residue at position 4 (Arg4) is a Symmetric dimethylarginine; by PRMT5; alternate. N6-(2-hydroxyisobutyryl)lysine is present on Lys6. Over residues 7–19 (QGGKARAKAKSRS) the composition is skewed to basic residues. Lys10 carries the post-translational modification N6-(2-hydroxyisobutyryl)lysine; alternate. N6-(beta-hydroxybutyryl)lysine; alternate is present on residues Lys10 and Lys14. Lys10 is subject to N6-lactoyllysine; alternate. Lys10 carries the N6-succinyllysine; alternate modification. A Glycyl lysine isopeptide (Lys-Gly) (interchain with G-Cter in ubiquitin); alternate cross-link involves residue Lys14. Lys16 participates in a covalent cross-link: Glycyl lysine isopeptide (Lys-Gly) (interchain with G-Cter in ubiquitin). Lys37 is modified (N6-(2-hydroxyisobutyryl)lysine; alternate). Lys37 is subject to N6-(beta-hydroxybutyryl)lysine; alternate. Lys37 is modified (N6-crotonyllysine; alternate). N6-(2-hydroxyisobutyryl)lysine is present on residues Lys75 and Lys76. Lys96 carries the N6-(2-hydroxyisobutyryl)lysine; alternate modification. Lys96 carries the post-translational modification N6-(beta-hydroxybutyryl)lysine; alternate. Lys96 bears the N6-succinyllysine; alternate mark. Lys96 is modified (N6-glutaryllysine; alternate). N5-methylglutamine is present on Gln105. Position 119 is an N6-(2-hydroxyisobutyryl)lysine; alternate (Lys119). Residue Lys119 is modified to N6-(beta-hydroxybutyryl)lysine; alternate. N6-crotonyllysine; alternate occurs at positions 119 and 120. Residues Lys119 and Lys120 each carry the N6-glutaryllysine; alternate modification. Lys120 is covalently cross-linked (Glycyl lysine isopeptide (Lys-Gly) (interchain with G-Cter in ubiquitin); alternate). Residue Thr121 is modified to Phosphothreonine; by DCAF1. Lys126 carries the post-translational modification N6-crotonyllysine; alternate. N6-glutaryllysine; alternate is present on Lys126.

The protein belongs to the histone H2A family. As to quaternary structure, the nucleosome is a histone octamer containing two molecules each of H2A, H2B, H3 and H4 assembled in one H3-H4 heterotetramer and two H2A-H2B heterodimers. The octamer wraps approximately 147 bp of DNA. Post-translationally, deiminated on Arg-4 in granulocytes upon calcium entry. Monoubiquitination of Lys-120 (H2AK119Ub) by RING1, TRIM37 and RNF2/RING2 complex gives a specific tag for epigenetic transcriptional repression and participates in X chromosome inactivation of female mammals. It is involved in the initiation of both imprinted and random X inactivation. Ubiquitinated H2A is enriched in inactive X chromosome chromatin. Ubiquitination of H2A functions downstream of methylation of 'Lys-27' of histone H3 (H3K27me). H2AK119Ub by RNF2/RING2 can also be induced by ultraviolet and may be involved in DNA repair. Monoubiquitination of Lys-120 (H2AK119Ub) by TRIM37 may promote transformation of cells in a number of breast cancers. Following DNA double-strand breaks (DSBs), it is ubiquitinated through 'Lys-63' linkage of ubiquitin moieties by the E2 ligase UBE2N and the E3 ligases RNF8 and RNF168, leading to the recruitment of repair proteins to sites of DNA damage. Ubiquitination at Lys-14 and Lys-16 (H2AK13Ub and H2AK15Ub, respectively) in response to DNA damage is initiated by RNF168 that mediates monoubiquitination at these 2 sites, and 'Lys-63'-linked ubiquitin are then conjugated to monoubiquitin; RNF8 is able to extend 'Lys-63'-linked ubiquitin chains in vitro. Deubiquitinated by USP51 at Lys-14 and Lys-16 (H2AK13Ub and H2AK15Ub, respectively) after damaged DNA is repaired. H2AK119Ub and ionizing radiation-induced 'Lys-63'-linked ubiquitination (H2AK13Ub and H2AK15Ub) are distinct events. In terms of processing, phosphorylation on Ser-2 (H2AS1ph) is enhanced during mitosis. Phosphorylation on Ser-2 by RPS6KA5/MSK1 directly represses transcription. Acetylation of H3 inhibits Ser-2 phosphorylation by RPS6KA5/MSK1. Phosphorylation at Thr-121 (H2AT120ph) by DCAF1 is present in the regulatory region of many tumor suppresor genes and down-regulates their transcription. Post-translationally, glutamine methylation at Gln-105 (H2AQ104me) by FBL is specifically dedicated to polymerase I. It is present at 35S ribosomal DNA locus and impairs binding of the FACT complex. Symmetric dimethylation on Arg-4 by the PRDM1/PRMT5 complex may play a crucial role in the germ-cell lineage. In terms of processing, crotonylation (Kcr) is specifically present in male germ cells and marks testis-specific genes in post-meiotic cells, including X-linked genes that escape sex chromosome inactivation in haploid cells. Crotonylation marks active promoters and enhancers and confers resistance to transcriptional repressors. It is also associated with post-meiotically activated genes on autosomes. Post-translationally, lactylated in macrophages by EP300/P300 by using lactoyl-CoA directly derived from endogenous or exogenous lactate, leading to stimulates gene transcription.

It is found in the nucleus. It localises to the chromosome. Its function is as follows. Core component of nucleosome. Nucleosomes wrap and compact DNA into chromatin, limiting DNA accessibility to the cellular machineries which require DNA as a template. Histones thereby play a central role in transcription regulation, DNA repair, DNA replication and chromosomal stability. DNA accessibility is regulated via a complex set of post-translational modifications of histones, also called histone code, and nucleosome remodeling. This is Histone H2A type 3 from Homo sapiens (Human).